Consider the following 417-residue polypeptide: V-set and immunoglobulin domain-containing protein 8 (417 aa).

An N-terminal signal peptide occupies residues 1–21; it reads MGVRGALHLLLVCLSPALLSA. Ig-like V-type domains lie at 22-140 and 145-256; these read VRIN…VIVT and PAVP…VKVS. Residues 22–262 lie on the Extracellular side of the membrane; it reads VRINGDGQEV…VKVSDSQRVG (241 aa). 2 disulfides stabilise this stretch: cysteine 44-cysteine 125 and cysteine 166-cysteine 238. A helical membrane pass occupies residues 263–283; that stretch reads MIVGAVLGSLLMLACLALGIW. Residues 284-417 lie on the Cytoplasmic side of the membrane; sequence GLICCCCGGG…QRSCKDGLLV (134 aa).

It localises to the membrane. In Mus musculus (Mouse), this protein is V-set and immunoglobulin domain-containing protein 8 (Vsig8).